The sequence spans 115 residues: U3-lycotoxin-Ls1k (115 aa).

The N-terminal stretch at 1 to 20 (MKFVLLFGVLLVALFSYSSA) is a signal peptide. Residues 21–44 (EMLDDFGQADEDELLSLIEKEEAR) constitute a propeptide that is removed on maturation. Disulfide bonds link cysteine 48–cysteine 63, cysteine 55–cysteine 72, cysteine 62–cysteine 87, and cysteine 74–cysteine 85.

It belongs to the neurotoxin 19 (CSTX) family. 01 subfamily. In terms of tissue distribution, expressed by the venom gland.

The protein resides in the secreted. In Lycosa singoriensis (Wolf spider), this protein is U3-lycotoxin-Ls1k.